The primary structure comprises 499 residues: Cysteine--tRNA ligase (499 aa).

Position 31 (Cys31) interacts with Zn(2+). The 'HIGH' region signature appears at 33–43 (VTVYDLCHLGH). Cys215, His240, and Glu244 together coordinate Zn(2+). A 'KMSKS' region motif is present at residues 272-276 (KMSKS). An ATP-binding site is contributed by Lys275.

This sequence belongs to the class-I aminoacyl-tRNA synthetase family. Monomer. Zn(2+) serves as cofactor.

The protein resides in the cytoplasm. It catalyses the reaction tRNA(Cys) + L-cysteine + ATP = L-cysteinyl-tRNA(Cys) + AMP + diphosphate. The polypeptide is Cysteine--tRNA ligase (Synechococcus sp. (strain WH7803)).